A 160-amino-acid polypeptide reads, in one-letter code: Transcription antitermination protein NusB (160 aa).

This sequence belongs to the NusB family.

In terms of biological role, involved in transcription antitermination. Required for transcription of ribosomal RNA (rRNA) genes. Binds specifically to the boxA antiterminator sequence of the ribosomal RNA (rrn) operons. In Nitrobacter hamburgensis (strain DSM 10229 / NCIMB 13809 / X14), this protein is Transcription antitermination protein NusB.